The primary structure comprises 347 residues: tRNA pseudouridine synthase D (347 aa).

Catalysis depends on aspartate 81, which acts as the Nucleophile. Positions 158 to 305 (GVPNYFGSQR…RHDRREIALK (148 aa)) constitute a TRUD domain.

It belongs to the pseudouridine synthase TruD family.

It catalyses the reaction uridine(13) in tRNA = pseudouridine(13) in tRNA. Responsible for synthesis of pseudouridine from uracil-13 in transfer RNAs. The polypeptide is tRNA pseudouridine synthase D (Vibrio parahaemolyticus serotype O3:K6 (strain RIMD 2210633)).